The following is a 775-amino-acid chain: 5-methyltetrahydropteroyltriglutamate--homocysteine methyltransferase (775 aa).

Residues 16 to 19 and K115 each bind 5-methyltetrahydropteroyltri-L-glutamate; that span reads REMK. L-homocysteine-binding positions include 435–437 and E488; that span reads IGS. L-methionine contacts are provided by residues 435-437 and E488; that span reads IGS. 5-methyltetrahydropteroyltri-L-glutamate-binding positions include 519–520 and W565; that span reads RC. D603 is a binding site for L-homocysteine. An L-methionine-binding site is contributed by D603. E609 lines the 5-methyltetrahydropteroyltri-L-glutamate pocket. Residues H645, C647, and E669 each contribute to the Zn(2+) site. H698 serves as the catalytic Proton donor. Residue C730 participates in Zn(2+) binding.

Belongs to the vitamin-B12 independent methionine synthase family. Zn(2+) serves as cofactor.

The catalysed reaction is 5-methyltetrahydropteroyltri-L-glutamate + L-homocysteine = tetrahydropteroyltri-L-glutamate + L-methionine. It participates in amino-acid biosynthesis; L-methionine biosynthesis via de novo pathway; L-methionine from L-homocysteine (MetE route): step 1/1. In terms of biological role, catalyzes the transfer of a methyl group from 5-methyltetrahydrofolate to homocysteine resulting in methionine formation. The polypeptide is 5-methyltetrahydropteroyltriglutamate--homocysteine methyltransferase (Coxiella burnetii (strain CbuK_Q154) (Coxiella burnetii (strain Q154))).